The following is a 274-amino-acid chain: Type III pantothenate kinase (274 aa).

An ATP-binding site is contributed by 6–13 (DVRNTHTV). 109-112 (GADR) contributes to the substrate binding site. Aspartate 111 serves as the catalytic Proton acceptor. Aspartate 131 is a binding site for K(+). Residue serine 134 coordinates ATP. Substrate is bound at residue threonine 186.

It belongs to the type III pantothenate kinase family. In terms of assembly, homodimer. NH4(+) is required as a cofactor. Requires K(+) as cofactor.

Its subcellular location is the cytoplasm. The enzyme catalyses (R)-pantothenate + ATP = (R)-4'-phosphopantothenate + ADP + H(+). The protein operates within cofactor biosynthesis; coenzyme A biosynthesis; CoA from (R)-pantothenate: step 1/5. Catalyzes the phosphorylation of pantothenate (Pan), the first step in CoA biosynthesis. The sequence is that of Type III pantothenate kinase from Mycobacterium leprae (strain Br4923).